The primary structure comprises 245 residues: UDP-N-acetyl-D-mannosaminuronic acid transferase (245 aa).

It belongs to the glycosyltransferase 26 family.

It catalyses the reaction UDP-N-acetyl-alpha-D-mannosaminouronate + N-acetyl-alpha-D-glucosaminyl-di-trans,octa-cis-undecaprenyl diphosphate = beta-D-ManNAcA-(1-&gt;4)-alpha-D-GlcNAc-di-trans,octa-cis-undecaprenyl diphosphate + UDP + H(+). The protein operates within bacterial outer membrane biogenesis; enterobacterial common antigen biosynthesis. Functionally, catalyzes the synthesis of Und-PP-GlcNAc-ManNAcA (Lipid II), the second lipid-linked intermediate involved in enterobacterial common antigen (ECA) synthesis. The protein is UDP-N-acetyl-D-mannosaminuronic acid transferase of Proteus mirabilis (strain HI4320).